The following is a 198-amino-acid chain: Probable chemoreceptor glutamine deamidase CheD (198 aa).

The protein belongs to the CheD family.

It catalyses the reaction L-glutaminyl-[protein] + H2O = L-glutamyl-[protein] + NH4(+). In terms of biological role, probably deamidates glutamine residues to glutamate on methyl-accepting chemotaxis receptors (MCPs), playing an important role in chemotaxis. This chain is Probable chemoreceptor glutamine deamidase CheD, found in Stenotrophomonas maltophilia (strain R551-3).